The following is a 239-amino-acid chain: Probable GTP-binding protein EngB (239 aa).

The region spanning 23-219 (QVPEIAFAGR…NDKILELLGL (197 aa)) is the EngB-type G domain. GTP contacts are provided by residues 31 to 38 (GRSNAGKS), 58 to 62 (GRTQH), 92 to 95 (DLPG), 159 to 162 (TKSD), and 193 to 200 (FTAQLFSA). Positions 38 and 60 each coordinate Mg(2+).

It belongs to the TRAFAC class TrmE-Era-EngA-EngB-Septin-like GTPase superfamily. EngB GTPase family. Mg(2+) is required as a cofactor.

Necessary for normal cell division and for the maintenance of normal septation. This is Probable GTP-binding protein EngB from Herminiimonas arsenicoxydans.